Reading from the N-terminus, the 181-residue chain is ATP synthase subunit delta (181 aa).

The protein belongs to the ATPase delta chain family. As to quaternary structure, F-type ATPases have 2 components, F(1) - the catalytic core - and F(0) - the membrane proton channel. F(1) has five subunits: alpha(3), beta(3), gamma(1), delta(1), epsilon(1). F(0) has three main subunits: a(1), b(2) and c(10-14). The alpha and beta chains form an alternating ring which encloses part of the gamma chain. F(1) is attached to F(0) by a central stalk formed by the gamma and epsilon chains, while a peripheral stalk is formed by the delta and b chains.

Its subcellular location is the cell membrane. F(1)F(0) ATP synthase produces ATP from ADP in the presence of a proton or sodium gradient. F-type ATPases consist of two structural domains, F(1) containing the extramembraneous catalytic core and F(0) containing the membrane proton channel, linked together by a central stalk and a peripheral stalk. During catalysis, ATP synthesis in the catalytic domain of F(1) is coupled via a rotary mechanism of the central stalk subunits to proton translocation. In terms of biological role, this protein is part of the stalk that links CF(0) to CF(1). It either transmits conformational changes from CF(0) to CF(1) or is implicated in proton conduction. The sequence is that of ATP synthase subunit delta from Bacillus pumilus (strain SAFR-032).